The following is a 365-amino-acid chain: Cobalt-precorrin-5B C(1)-methyltransferase (365 aa).

Belongs to the CbiD family.

It carries out the reaction Co-precorrin-5B + S-adenosyl-L-methionine = Co-precorrin-6A + S-adenosyl-L-homocysteine. It participates in cofactor biosynthesis; adenosylcobalamin biosynthesis; cob(II)yrinate a,c-diamide from sirohydrochlorin (anaerobic route): step 6/10. Catalyzes the methylation of C-1 in cobalt-precorrin-5B to form cobalt-precorrin-6A. This Clostridium perfringens (strain 13 / Type A) protein is Cobalt-precorrin-5B C(1)-methyltransferase.